We begin with the raw amino-acid sequence, 260 residues long: Hydroxypyruvate/pyruvate aldolase Bphyt_0320 (260 aa).

Catalysis depends on His-48, which acts as the Proton acceptor. A divalent metal cation-binding residues include Glu-157 and Asp-183.

It belongs to the HpcH/HpaI aldolase family. Mn(2+) is required as a cofactor. Requires Mg(2+) as cofactor. Co(2+) serves as cofactor.

It catalyses the reaction D-glyceraldehyde + 3-hydroxypyruvate = 2-dehydro-D-gluconate. The enzyme catalyses D-glyceraldehyde + pyruvate = 2-dehydro-3-deoxy-L-galactonate. The catalysed reaction is 2-dehydro-3-deoxy-D-gluconate = D-glyceraldehyde + pyruvate. Aldolase which can catalyze in vitro the aldolisation reaction between hydroxypyruvate (HPA) or pyruvate (PA) and D-glyceraldehyde (D-GA). The condensation of hydroxypyruvate and D-glyceraldehyde produces 2-dehydro-D-gluconate. The condensation of pyruvate and D-glyceraldehyde produces 2-dehydro-3-deoxy-L-galactonate as the major product and 2-dehydro-3-deoxy-D-gluconate. Also catalyzes the retro-aldol type decarboxylation of oxaloacetate, a general property of known pyruvate aldolases. The polypeptide is Hydroxypyruvate/pyruvate aldolase Bphyt_0320 (Paraburkholderia phytofirmans (strain DSM 17436 / LMG 22146 / PsJN) (Burkholderia phytofirmans)).